A 64-amino-acid chain; its full sequence is Large ribosomal subunit protein bL32 (64 aa).

Over residues 1–16 (MAVPKHRKSKAKKRSR) the composition is skewed to basic residues. Residues 1–22 (MAVPKHRKSKAKKRSRQAANDK) form a disordered region.

It belongs to the bacterial ribosomal protein bL32 family.

This chain is Large ribosomal subunit protein bL32, found in Brachyspira hyodysenteriae (strain ATCC 49526 / WA1).